Consider the following 271-residue polypeptide: 2,3,4,5-tetrahydropyridine-2,6-dicarboxylate N-succinyltransferase (271 aa).

Belongs to the transferase hexapeptide repeat family.

The protein localises to the cytoplasm. It carries out the reaction (S)-2,3,4,5-tetrahydrodipicolinate + succinyl-CoA + H2O = (S)-2-succinylamino-6-oxoheptanedioate + CoA. It functions in the pathway amino-acid biosynthesis; L-lysine biosynthesis via DAP pathway; LL-2,6-diaminopimelate from (S)-tetrahydrodipicolinate (succinylase route): step 1/3. The sequence is that of 2,3,4,5-tetrahydropyridine-2,6-dicarboxylate N-succinyltransferase from Coxiella burnetii (strain CbuG_Q212) (Coxiella burnetii (strain Q212)).